We begin with the raw amino-acid sequence, 313 residues long: Ribosomal RNA small subunit methyltransferase H (313 aa).

Residues 35 to 37, D55, F79, D101, and Q108 each bind S-adenosyl-L-methionine; that span reads GGH.

This sequence belongs to the methyltransferase superfamily. RsmH family.

It is found in the cytoplasm. It carries out the reaction cytidine(1402) in 16S rRNA + S-adenosyl-L-methionine = N(4)-methylcytidine(1402) in 16S rRNA + S-adenosyl-L-homocysteine + H(+). Specifically methylates the N4 position of cytidine in position 1402 (C1402) of 16S rRNA. In Shigella sonnei (strain Ss046), this protein is Ribosomal RNA small subunit methyltransferase H.